Consider the following 373-residue polypeptide: Gametogenetin-binding protein 1 (373 aa).

Disordered regions lie at residues 26-113 (VGSK…GSQT) and 237-268 (KAQR…AVDE). Over residues 36 to 49 (NRPLNRSQPSSSPE) the composition is skewed to polar residues. Residues 226–373 (LYKQLQKSAM…DEMGNWPPPE (148 aa)) are required for induction of mitochondrial fragmentation. The span at 254-263 (SPTEERGERE) shows a compositional bias: basic and acidic residues. Residues 301–373 (KTFRSTDTVG…DEMGNWPPPE (73 aa)) are interaction with GGN.

As to quaternary structure, interacts with CCDC159. Interacts with GGN.

The protein resides in the cytoplasm. The protein localises to the membrane. It localises to the golgi apparatus. It is found in the mitochondrion intermembrane space. In terms of biological role, induces mitochondrial fragmentation, possibly by promoting DNM1L-dependent fission and may play a role in mitochondrial morphogenesis during spermatogenesis. The chain is Gametogenetin-binding protein 1 (Ggnbp1) from Rattus norvegicus (Rat).